A 310-amino-acid chain; its full sequence is Quinolinate synthase (310 aa).

H27 and S44 together coordinate iminosuccinate. C89 is a [4Fe-4S] cluster binding site. Residues 115–117 (YVN) and S132 each bind iminosuccinate. Residue C175 coordinates [4Fe-4S] cluster. Residues 201–203 (HPE) and T222 each bind iminosuccinate. C267 contributes to the [4Fe-4S] cluster binding site.

The protein belongs to the quinolinate synthase family. Type 2 subfamily. Requires [4Fe-4S] cluster as cofactor.

The protein localises to the cytoplasm. The catalysed reaction is iminosuccinate + dihydroxyacetone phosphate = quinolinate + phosphate + 2 H2O + H(+). It participates in cofactor biosynthesis; NAD(+) biosynthesis; quinolinate from iminoaspartate: step 1/1. Its function is as follows. Catalyzes the condensation of iminoaspartate with dihydroxyacetone phosphate to form quinolinate. The chain is Quinolinate synthase from Thermus thermophilus (strain ATCC BAA-163 / DSM 7039 / HB27).